A 686-amino-acid chain; its full sequence is Chondroitin synthase (686 aa).

A galactosaminyltransferase; A1 domain region spans residues 130 to 417 (YVWAGKRKEL…LLQQKVPYFY (288 aa)). Residues Pro157, Arg161, Asp188, Tyr217, Arg223, and 239–240 (DC) contribute to the UDP-N-acetyl-alpha-D-galactosamine site. Asp241 lines the Mn(2+) pocket. 361–362 (ED) is a binding site for UDP-N-acetyl-alpha-D-galactosamine. His386 contacts Mn(2+). The glucuronosyltransferase; A2 domain stretch occupies residues 418-682 (RKKEKIESAT…ECRKYTWEKI (265 aa)). UDP-alpha-D-glucuronate contacts are provided by residues Tyr441, Asp469, and 517-520 (QLDS). Asp521 lines the Mn(2+) pocket. UDP-alpha-D-glucuronate is bound by residues His581 and 603–604 (AV). His631 is a Mn(2+) binding site.

It belongs to the glycosyltransferase 2 family. CS/HAS subfamily. The cofactor is Mn(2+).

The catalysed reaction is 3-O-(beta-D-GlcA-(1-&gt;3)-beta-D-GalNAc-(1-&gt;4)-beta-D-GlcA-(1-&gt;3)-beta-D-Gal-(1-&gt;3)-beta-D-Gal-(1-&gt;4)-beta-D-Xyl)-L-seryl-[protein] + UDP-N-acetyl-alpha-D-galactosamine = 3-O-(beta-D-GalNAc-(1-&gt;4)-beta-D-GlcA-(1-&gt;3)-beta-D-GalNAc-(1-&gt;4)-beta-D-GlcA-(1-&gt;3)-beta-D-Gal-(1-&gt;3)-beta-D-Gal-(1-&gt;4)-beta-D-Xyl)-L-seryl-[protein] + UDP + H(+). The enzyme catalyses 3-O-{beta-D-GlcA-(1-&gt;3)-[beta-D-GalNAc-(1-&gt;4)-beta-D-GlcA-(1-&gt;3)](n)-beta-D-GalNAc-(1-&gt;4)-beta-D-GlcA-(1-&gt;3)-beta-D-Gal-(1-&gt;3)-beta-D-Gal-(1-&gt;4)-beta-D-Xyl}-L-seryl-[protein] + UDP-N-acetyl-alpha-D-galactosamine = 3-O-{[beta-D-GalNAc-(1-&gt;4)-beta-D-GlcA-(1-&gt;3)](n+1)-beta-D-GalNAc-(1-&gt;4)-beta-D-GlcA-(1-&gt;3)-beta-D-Gal-(1-&gt;3)-beta-D-Gal-(1-&gt;4)-beta-D-Xyl}-L-seryl-[protein] + UDP + H(+). It carries out the reaction 3-O-(beta-D-GalNAc-(1-&gt;4)-beta-D-GlcA-(1-&gt;3)-beta-D-Gal-(1-&gt;3)-beta-D-Gal-(1-&gt;4)-beta-D-Xyl)-L-seryl-[protein] + UDP-alpha-D-glucuronate = 3-O-(beta-D-GlcA-(1-&gt;3)-beta-D-GalNAc-(1-&gt;4)-beta-D-GlcA-(1-&gt;3)-beta-D-Gal-(1-&gt;3)-beta-D-Gal-(1-&gt;4)-beta-D-Xyl)-L-seryl-[protein] + UDP + H(+). It catalyses the reaction 3-O-{[beta-D-GalNAc-(1-&gt;4)-beta-D-GlcA-(1-&gt;3)](n)-beta-D-GalNAc-(1-&gt;4)-beta-D-GlcA-(1-&gt;3)-beta-D-Gal-(1-&gt;3)-beta-D-Gal-(1-&gt;4)-beta-D-Xyl}-L-seryl-[protein] + UDP-alpha-D-glucuronate = 3-O-{beta-D-GlcA-(1-&gt;3)-[beta-D-GalNAc-(1-&gt;4)-beta-D-GlcA-(1-&gt;3)](n)-beta-D-GalNAc-(1-&gt;4)-beta-D-GlcA-(1-&gt;3)-beta-D-Gal-(1-&gt;3)-beta-D-Gal-(1-&gt;4)-beta-D-Xyl}-L-seryl-[protein] + UDP + H(+). Glycosyltransferase that catalyzes elongation of chondroitin, a polysaccharide composed of a repeating disaccharide of N-acetylgalactosamine (GalNAc) and glucuronic acid (GlcUA) units, by alternatively transferring the GlcUA and GalNAc moiety from UDP-GlcUA and UDP-GalNAc to the non-reducing ends of the chondroitin chain. Each chondroitin unit has the composition beta-(1-&gt;4)-GlcUA-beta-(1-&gt;3)-GalNAc. The polypeptide is Chondroitin synthase (kfoC) (Escherichia coli).